Reading from the N-terminus, the 244-residue chain is E3 ubiquitin-protein ligase RNF166 (244 aa).

The disordered stretch occupies residues 10 to 30; it reads AQRPQAPGPGPPRPPPPAGPA. Over residues 15–28 the composition is skewed to pro residues; that stretch reads APGPGPPRPPPPAG. The RING-type zinc finger occupies 40 to 80; it reads CPICLEVFHRAVGIAGCGHTFCGECLQPCLQVPSPLCPLCR. Zn(2+)-binding residues include Cys-105, Cys-108, His-120, and Cys-124. The segment at 105–124 adopts a C2HC RNF-type zinc-finger fold; sequence CRGCSKKVTLAKMRSHVSSC. Residues 228–244 form the UIM domain; sequence DEEAALQAALALSLSEN.

The protein resides in the cytoplasm. It carries out the reaction S-ubiquitinyl-[E2 ubiquitin-conjugating enzyme]-L-cysteine + [acceptor protein]-L-lysine = [E2 ubiquitin-conjugating enzyme]-L-cysteine + N(6)-ubiquitinyl-[acceptor protein]-L-lysine.. The protein operates within protein modification; protein ubiquitination. Functionally, E3 ubiquitin-protein ligase that promotes the ubiquitination of different substrates. This Gallus gallus (Chicken) protein is E3 ubiquitin-protein ligase RNF166 (RNF166).